The following is a 1076-amino-acid chain: Serine/threonine-protein phosphatase 6 regulatory ankyrin repeat subunit C (1076 aa).

ANK repeat units follow at residues 7–36, 40–69, 73–102, 106–135, 139–168, 172–201, 205–234, 238–267, 271–301, 305–334, 338–367, 371–400, 422–451, 455–484, 488–545, 549–579, 584–613, 617–646, 651–680, 687–716, 720–749, 753–782, 790–819, 822–852, 857–886, 890–920, 924–953, and 960–989; these read TDQP…NINV, ERRT…NVNA, LWLT…DVNA, LWQT…SLNV, SGRS…SLNV, KERQ…DLGC, KGYG…EIDE, FGNT…NVNQ, KGFT…DVNY, EGKS…EIDC, FGNT…DTAR, HDMF…LYSI, LGRT…DLRR, FGRT…GVNE, KGCS…DPSL, QGYT…CLED, IPVS…NLDV, KGRT…SALI, RKWT…RADI, YGQT…TADA, RGRT…FVLC, KGRT…STDP, SGYS…FSYL, NPFT…KIVN, KGRT…EVNA, TGRT…DLTV, NKNT…DLGL, and ALQM…TVLA. Basic and acidic residues predominate over residues 502–514; sequence YRRAEPHTPSSHD. The tract at residues 502 to 522 is disordered; it reads YRRAEPHTPSSHDAEEDEPLK. Ser1028 and Ser1075 each carry phosphoserine.

As to quaternary structure, protein phosphatase 6 (PP6) holoenzyme is proposed to be a heterotrimeric complex formed by the catalytic subunit, a SAPS domain-containing subunit (PP6R) and an ankyrin repeat-domain containing regulatory subunit (ARS). Interacts with PPP6R1.

Putative regulatory subunit of protein phosphatase 6 (PP6) that may be involved in the recognition of phosphoprotein substrates. The sequence is that of Serine/threonine-protein phosphatase 6 regulatory ankyrin repeat subunit C (ANKRD52) from Homo sapiens (Human).